A 231-amino-acid polypeptide reads, in one-letter code: Fibrillarin-like rRNA/tRNA 2'-O-methyltransferase (231 aa).

S-adenosyl-L-methionine contacts are provided by residues 89-90 (TT), 108-109 (EF), 133-134 (DA), and 153-156 (DIAQ).

It belongs to the methyltransferase superfamily. Fibrillarin family. In terms of assembly, interacts with nop5. Component of box C/D small ribonucleoprotein (sRNP) particles that contain rpl7ae, FlpA and nop5, plus a guide RNA.

Functionally, involved in pre-rRNA and tRNA processing. Utilizes the methyl donor S-adenosyl-L-methionine to catalyze the site-specific 2'-hydroxyl methylation of ribose moieties in rRNA and tRNA. Site specificity is provided by a guide RNA that base pairs with the substrate. Methylation occurs at a characteristic distance from the sequence involved in base pairing with the guide RNA. The polypeptide is Fibrillarin-like rRNA/tRNA 2'-O-methyltransferase (Sulfolobus acidocaldarius (strain ATCC 33909 / DSM 639 / JCM 8929 / NBRC 15157 / NCIMB 11770)).